The sequence spans 55 residues: Small ribosomal subunit protein bS21 (55 aa).

The protein belongs to the bacterial ribosomal protein bS21 family.

This Ureaplasma parvum serovar 3 (strain ATCC 27815 / 27 / NCTC 11736) protein is Small ribosomal subunit protein bS21.